A 459-amino-acid polypeptide reads, in one-letter code: Probable 3-ketoacyl-CoA synthase 14 (459 aa).

A signal peptide spans 1-25; sequence MFIAMADFKLLLLILILLSLFELDL. The helical transmembrane segment at 32 to 52 threads the bilayer; sequence FFSPFPVKIGLLLISIFFYAY. One can recognise an FAE domain in the interval 52–334; that stretch reads YSTTRSKPVY…FILFLVKSKL (283 aa). Residues histidine 268, histidine 352, histidine 356, histidine 385, and asparagine 389 contribute to the active site.

It belongs to the thiolase-like superfamily. Chalcone/stilbene synthases family. Expressed in siliques.

It localises to the membrane. It catalyses the reaction a very-long-chain acyl-CoA + malonyl-CoA + H(+) = a very-long-chain 3-oxoacyl-CoA + CO2 + CoA. It participates in lipid metabolism; fatty acid biosynthesis. This is Probable 3-ketoacyl-CoA synthase 14 from Arabidopsis thaliana (Mouse-ear cress).